A 37-amino-acid chain; its full sequence is Large ribosomal subunit protein bL36 (37 aa).

Belongs to the bacterial ribosomal protein bL36 family.

This chain is Large ribosomal subunit protein bL36, found in Geobacter sp. (strain M21).